Consider the following 444-residue polypeptide: Acyl-CoA 6-desaturase (444 aa).

The Cytoplasmic segment spans residues 1-130; it reads MGGGGQQTDR…EAEGCFKTQP (130 aa). The Cytochrome b5 heme-binding domain maps to 18–95; that stretch reads FSSYTWEEVQ…LKPLLIGELE (78 aa). Residues 131–151 traverse the membrane as a helical segment; sequence LFFALHLGHILLLEAIAFMMV. The Lumenal portion of the chain corresponds to 152-157; it reads WYFGTG. The chain crosses the membrane as a helical span at residues 158–178; it reads WINTLIVAVILATAQSQAGWL. Residues 179–264 lie on the Cytoplasmic side of the membrane; sequence QHDFGHLSVF…KHLPYNHQHK (86 aa). The Histidine box-1 motif lies at 180 to 184; sequence HDFGH. Positions 217-221 match the Histidine box-2 motif; the sequence is HFQHH. The helical transmembrane segment at 265 to 285 threads the bilayer; sequence YFFFIGPPLLIPVYFQFQIFH. Residues 286 to 305 lie on the Lumenal side of the membrane; it reads NMISHGMWVDLLWCISYYVR. Residues 306 to 326 form a helical membrane-spanning segment; that stretch reads YFLCYTQFYGVFWAIILFNFV. At 327–444 the chain is on the cytoplasmic side; sequence RFMESHWFVW…ELWLDAYLNK (118 aa). The Histidine box-3 signature appears at 382 to 386; that stretch reads QIEHH.

It belongs to the fatty acid desaturase type 1 family.

The protein localises to the endoplasmic reticulum membrane. The catalysed reaction is (9Z,12Z)-octadecadienoyl-CoA + 2 Fe(II)-[cytochrome b5] + O2 + 2 H(+) = (6Z,9Z,12Z)-octadecatrienoyl-CoA + 2 Fe(III)-[cytochrome b5] + 2 H2O. The enzyme catalyses (9Z,12Z,15Z)-octadecatrienoyl-CoA + 2 Fe(II)-[cytochrome b5] + O2 + 2 H(+) = (6Z,9Z,12Z,15Z)-octadecatetraenoyl-CoA + 2 Fe(III)-[cytochrome b5] + 2 H2O. It catalyses the reaction (8Z,11Z,14Z,17Z)-eicosatetraenoyl-CoA + 2 Fe(II)-[cytochrome b5] + O2 + 2 H(+) = (5Z,8Z,11Z,14Z,17Z)-eicosapentaenoyl-CoA + 2 Fe(III)-[cytochrome b5] + 2 H2O. It carries out the reaction (8Z,11Z,14Z)-eicosatrienoyl-CoA + 2 Fe(II)-[cytochrome b5] + O2 + 2 H(+) = (5Z,8Z,11Z,14Z)-eicosatetraenoyl-CoA + 2 Fe(III)-[cytochrome b5] + 2 H2O. The protein operates within lipid metabolism; polyunsaturated fatty acid biosynthesis. Fatty acid desaturase with bifunctional delta-5 and delta-6 activities. Component of a lipid metabolic pathway that catalyzes the biosynthesis of polyunsaturated fatty acids (PUFA) with preference toward n-3 substrates and Delta-6 function. The chain is Acyl-CoA 6-desaturase (fads2) from Danio rerio (Zebrafish).